Here is a 489-residue protein sequence, read N- to C-terminus: Cobyric acid synthase (489 aa).

One can recognise a GATase cobBQ-type domain in the interval 254–442 (ARVIAVPVLP…VHGLFADDRQ (189 aa)). C336 (nucleophile) is an active-site residue. Residue H434 is part of the active site.

Belongs to the CobB/CobQ family. CobQ subfamily.

The protein operates within cofactor biosynthesis; adenosylcobalamin biosynthesis. Functionally, catalyzes amidations at positions B, D, E, and G on adenosylcobyrinic A,C-diamide. NH(2) groups are provided by glutamine, and one molecule of ATP is hydrogenolyzed for each amidation. The chain is Cobyric acid synthase from Methylobacterium nodulans (strain LMG 21967 / CNCM I-2342 / ORS 2060).